We begin with the raw amino-acid sequence, 278 residues long: Toxin coregulated pilus biosynthesis protein D (278 aa).

The helical transmembrane segment at 30–50 (LLVAIIFLVLSILGGGAYLYY) threads the bilayer.

Its subcellular location is the cell membrane. Involved in TCP pilus biogenesis. This chain is Toxin coregulated pilus biosynthesis protein D (tcpD), found in Vibrio cholerae serotype O1 (strain ATCC 39315 / El Tor Inaba N16961).